A 64-amino-acid chain; its full sequence is Large ribosomal subunit protein bL32 (64 aa).

The span at 1 to 16 shows a compositional bias: basic residues; it reads MAVQKSRKTRSRRGMR. Residues 1-64 are disordered; sequence MAVQKSRKTR…TPKESYEDEE (64 aa).

The protein belongs to the bacterial ribosomal protein bL32 family.

In Coxiella burnetii (strain CbuK_Q154) (Coxiella burnetii (strain Q154)), this protein is Large ribosomal subunit protein bL32.